The primary structure comprises 748 residues: Catalase-peroxidase (748 aa).

The tryptophyl-tyrosyl-methioninium (Trp-Tyr) (with M-264) cross-link spans 92-238; sequence WHSAGTYRIG…LAAVQMGLIY (147 aa). The active-site Proton acceptor is His93. Positions 238–264 form a cross-link, tryptophyl-tyrosyl-methioninium (Tyr-Met) (with W-92); sequence YVNPEGPDGNPDPIASARDIRDTFARM. His279 contributes to the heme b binding site.

Belongs to the peroxidase family. Peroxidase/catalase subfamily. Homodimer or homotetramer. Heme b serves as cofactor. In terms of processing, formation of the three residue Trp-Tyr-Met cross-link is important for the catalase, but not the peroxidase activity of the enzyme.

It carries out the reaction H2O2 + AH2 = A + 2 H2O. The enzyme catalyses 2 H2O2 = O2 + 2 H2O. In terms of biological role, bifunctional enzyme with both catalase and broad-spectrum peroxidase activity. In Xanthomonas euvesicatoria pv. vesicatoria (strain 85-10) (Xanthomonas campestris pv. vesicatoria), this protein is Catalase-peroxidase.